The following is a 133-amino-acid chain: Large-conductance mechanosensitive channel (133 aa).

2 helical membrane-spanning segments follow: residues 14–34 (VVDL…VTTL) and 73–93 (FITV…MVVV).

The protein belongs to the MscL family. As to quaternary structure, homopentamer.

It is found in the cell membrane. Channel that opens in response to stretch forces in the membrane lipid bilayer. May participate in the regulation of osmotic pressure changes within the cell. The chain is Large-conductance mechanosensitive channel from Renibacterium salmoninarum (strain ATCC 33209 / DSM 20767 / JCM 11484 / NBRC 15589 / NCIMB 2235).